The sequence spans 450 residues: Sulfide:quinone oxidoreductase, mitochondrial (450 aa).

FAD is bound by residues 53–54 (AG), Glu-75, Gln-83, and Val-118. Lys-134 and Lys-173 each carry N6-acetyllysine. Cys-201 serves as the catalytic Cysteine persulfide intermediate. Cys-201 and Cys-379 are disulfide-bonded. Asp-336 contributes to the FAD binding site. Position 343 is a phosphoserine (Ser-343). 344–347 (KTAA) contacts FAD. Cys-379 (cysteine persulfide intermediate) is an active-site residue.

It belongs to the SQRD family. The cofactor is FAD.

Its subcellular location is the mitochondrion. It carries out the reaction ubiquinone-10 + hydrogen sulfide + sulfite + 2 H(+) = ubiquinol-10 + thiosulfate. The enzyme catalyses a quinone + hydrogen sulfide + glutathione + H(+) = S-sulfanylglutathione + a quinol. The catalysed reaction is ubiquinone-10 + hydrogen sulfide + glutathione + H(+) = S-sulfanylglutathione + ubiquinol-10. Catalyzes the oxidation of hydrogen sulfide with the help of a quinone, such as ubiquinone-10, giving rise to thiosulfate and ultimately to sulfane (molecular sulfur) atoms. Requires an additional electron acceptor; can use sulfite, sulfide or cyanide (in vitro). It is believed the in vivo electron acceptor is glutathione. In Mus musculus (Mouse), this protein is Sulfide:quinone oxidoreductase, mitochondrial.